The following is a 107-amino-acid chain: uncharacterized protein (107 aa).

This is an uncharacterized protein from Pasteurella multocida (strain Pm70).